Here is a 396-residue protein sequence, read N- to C-terminus: Elongation factor Tu 2 (396 aa).

Positions 10–206 (KPHINVGTIG…VLDSYIPEPQ (197 aa)) constitute a tr-type G domain. A G1 region spans residues 19–26 (GHVDHGKT). A GTP-binding site is contributed by 19–26 (GHVDHGKT). Threonine 26 serves as a coordination point for Mg(2+). The interval 60–64 (GITIN) is G2. Positions 81-84 (DCPG) are G3. Residues 81 to 85 (DCPGH) and 136 to 139 (NKAD) each bind GTP. A G4 region spans residues 136-139 (NKAD). The interval 174–176 (SAL) is G5.

It belongs to the TRAFAC class translation factor GTPase superfamily. Classic translation factor GTPase family. EF-Tu/EF-1A subfamily. As to quaternary structure, monomer.

Its subcellular location is the cytoplasm. It carries out the reaction GTP + H2O = GDP + phosphate + H(+). GTP hydrolase that promotes the GTP-dependent binding of aminoacyl-tRNA to the A-site of ribosomes during protein biosynthesis. In Nitrosomonas eutropha (strain DSM 101675 / C91 / Nm57), this protein is Elongation factor Tu 2.